Here is a 535-residue protein sequence, read N- to C-terminus: MSVRVLNPNAEVLNKSAALHMTINAAKGLQDVLKSNLGPKGTIKMLVGGSGDIKLTKDGNTLLKEMQIQNPTAIMIARTAVAQDDISGDGTTSTVIFIGELMKQSERCIDEGMHPRVLVDGFEIAKRATLQFLDNFKTPVVMGDEVDKEILKMVARTTLRTKLYEGLADQLTDIVVNSVLCIRKPEEAIDLFMVEIMHMRHKFDVDTRLVEGLVLDHGSRHPDMKRRAENCHILTCNVSLEYEKSEINAGFFYSNAEQREAMVTAERRSVDERVKKIIELKKKVCGDNDNFVVINQKGIDPPSLDLLAREGIIGLRRAKRRNMERLVLACGGEAVNSVDDLTPESLGWAGLVYEHVLGEEKYTFVEQVKNPNSCTILIKGPNDHTIAQIKDAVRDGLRSVKNTIEDECVVLGAGAFEVAARQHLLNEVKKTVQGRAQLGVEAFANALLVVPKTLAENAGLDTQDVIISLTSEHDKGNVVGLNLQDGEPIDPQLAGIFDNYSVKRQLINSGPVIASQLLLVDEVIRAGRNMRKPTA.

Belongs to the TCP-1 chaperonin family. As to quaternary structure, heterooligomeric complex of about 850 to 900 kDa that forms two stacked rings, 12 to 16 nm in diameter.

It localises to the cytoplasm. In terms of biological role, molecular chaperone; assists the folding of proteins upon ATP hydrolysis. Known to play a role, in vitro, in the folding of actin and tubulin. The polypeptide is T-complex protein 1 subunit zeta 2 (Arabidopsis thaliana (Mouse-ear cress)).